The chain runs to 350 residues: UDP-3-O-acylglucosamine N-acyltransferase (350 aa).

The active-site Proton acceptor is His-244.

It belongs to the transferase hexapeptide repeat family. LpxD subfamily. Homotrimer.

The enzyme catalyses a UDP-3-O-[(3R)-3-hydroxyacyl]-alpha-D-glucosamine + a (3R)-hydroxyacyl-[ACP] = a UDP-2-N,3-O-bis[(3R)-3-hydroxyacyl]-alpha-D-glucosamine + holo-[ACP] + H(+). It functions in the pathway bacterial outer membrane biogenesis; LPS lipid A biosynthesis. Catalyzes the N-acylation of UDP-3-O-acylglucosamine using 3-hydroxyacyl-ACP as the acyl donor. Is involved in the biosynthesis of lipid A, a phosphorylated glycolipid that anchors the lipopolysaccharide to the outer membrane of the cell. In Herminiimonas arsenicoxydans, this protein is UDP-3-O-acylglucosamine N-acyltransferase.